The primary structure comprises 339 residues: N-acetyl-gamma-glutamyl-phosphate reductase (339 aa).

Residue cysteine 145 is part of the active site.

This sequence belongs to the NAGSA dehydrogenase family. Type 1 subfamily.

It is found in the cytoplasm. It catalyses the reaction N-acetyl-L-glutamate 5-semialdehyde + phosphate + NADP(+) = N-acetyl-L-glutamyl 5-phosphate + NADPH + H(+). Its pathway is amino-acid biosynthesis; L-arginine biosynthesis; N(2)-acetyl-L-ornithine from L-glutamate: step 3/4. Its function is as follows. Catalyzes the NADPH-dependent reduction of N-acetyl-5-glutamyl phosphate to yield N-acetyl-L-glutamate 5-semialdehyde. This Thermotoga sp. (strain RQ2) protein is N-acetyl-gamma-glutamyl-phosphate reductase.